Here is a 199-residue protein sequence, read N- to C-terminus: Recombination protein RecR (199 aa).

The segment at 57 to 72 adopts a C4-type zinc-finger fold; the sequence is CEICGNMDTKNICHIC. The region spanning 80 to 175 is the Toprim domain; that stretch reads STIAIVETVA…KISRLASGIP (96 aa).

Belongs to the RecR family.

Functionally, may play a role in DNA repair. It seems to be involved in an RecBC-independent recombinational process of DNA repair. It may act with RecF and RecO. This is Recombination protein RecR from Rickettsia typhi (strain ATCC VR-144 / Wilmington).